Reading from the N-terminus, the 302-residue chain is DNA-directed RNA polymerase II subunit rpb3 (302 aa).

This sequence belongs to the archaeal Rpo3/eukaryotic RPB3 RNA polymerase subunit family. Component of the RNA polymerase II (Pol II) complex consisting of 12 subunits.

Its subcellular location is the nucleus. Functionally, DNA-dependent RNA polymerase catalyzes the transcription of DNA into RNA using the four ribonucleoside triphosphates as substrates. Component of RNA polymerase II which synthesizes mRNA precursors and many functional non-coding RNAs. Pol II is the central component of the basal RNA polymerase II transcription machinery. It is composed of mobile elements that move relative to each other. Rpb3 is part of the core element with the central large cleft and the clamp element that moves to open and close the cleft. This Dictyostelium discoideum (Social amoeba) protein is DNA-directed RNA polymerase II subunit rpb3 (polr2c).